The chain runs to 266 residues: Undecaprenyl-diphosphatase (266 aa).

Transmembrane regions (helical) follow at residues 39-59 (PGASLSATIQLGSVIAIAYYF), 86-106 (SIFIGTIPIVLLGGSIKIFIP), 112-132 (VLRSNLSIALVSFLMAFFMYL), 147-167 (NFSNSFLIGIFQAFAIFPGVS), 189-209 (FSFLLGMPAISLAAIVEFVSS), 216-236 (LGFFPLFVGLITTFLSSLLAI), and 246-266 (NGLKIFIIYRVIFGVVILLNL).

This sequence belongs to the UppP family.

It localises to the cell inner membrane. The enzyme catalyses di-trans,octa-cis-undecaprenyl diphosphate + H2O = di-trans,octa-cis-undecaprenyl phosphate + phosphate + H(+). Catalyzes the dephosphorylation of undecaprenyl diphosphate (UPP). Confers resistance to bacitracin. The protein is Undecaprenyl-diphosphatase of Prochlorococcus marinus (strain MIT 9301).